Reading from the N-terminus, the 467-residue chain is tRNA modification GTPase MnmE (467 aa).

(6S)-5-formyl-5,6,7,8-tetrahydrofolate contacts are provided by R27, E89, and R128. The TrmE-type G domain occupies 225-387; the sequence is GISMVIAGRP…LKQAIFTVVT (163 aa). A K(+)-binding site is contributed by N235. GTP contacts are provided by residues 235–240, 254–260, 279–282, and 368–370; these read NVGKSS, TSIAGTT, DTAG, and SAR. Mg(2+) is bound at residue S239. K(+)-binding residues include T254, I256, and T259. T260 is a Mg(2+) binding site. K467 provides a ligand contact to (6S)-5-formyl-5,6,7,8-tetrahydrofolate.

Belongs to the TRAFAC class TrmE-Era-EngA-EngB-Septin-like GTPase superfamily. TrmE GTPase family. As to quaternary structure, homodimer. Heterotetramer of two MnmE and two MnmG subunits. K(+) is required as a cofactor.

It localises to the cytoplasm. Its function is as follows. Exhibits a very high intrinsic GTPase hydrolysis rate. Involved in the addition of a carboxymethylaminomethyl (cmnm) group at the wobble position (U34) of certain tRNAs, forming tRNA-cmnm(5)s(2)U34. This is tRNA modification GTPase MnmE from Desulfotalea psychrophila (strain LSv54 / DSM 12343).